The chain runs to 403 residues: D-galactonate dehydratase family member Mmwyl1_0037 (403 aa).

Substrate-binding residues include Asn-37 and His-122. Tyr-159 acts as the Proton donor/acceptor in catalysis. Asp-211 contacts Mg(2+). The Proton donor/acceptor role is filled by His-213. 2 residues coordinate Mg(2+): Glu-237 and Glu-263. Glu-263, Arg-284, His-313, Asp-317, and Glu-340 together coordinate substrate.

The protein belongs to the mandelate racemase/muconate lactonizing enzyme family. GalD subfamily. The cofactor is Mg(2+).

The catalysed reaction is D-mannonate = 2-dehydro-3-deoxy-D-gluconate + H2O. In terms of biological role, has low D-mannonate dehydratase activity (in vitro), suggesting that this is not a physiological substrate and that it has no significant role in D-mannonate degradation in vivo. Has no detectable activity with a panel of 70 other acid sugars (in vitro). This Marinomonas sp. (strain MWYL1) protein is D-galactonate dehydratase family member Mmwyl1_0037.